A 396-amino-acid chain; its full sequence is Elongation factor Tu (396 aa).

A tr-type G domain is found at 10 to 206; sequence KPHCNIGTIG…AVDAYIPQPE (197 aa). Residues 19–26 form a G1 region; that stretch reads GHVDHGKT. Residue 19-26 participates in GTP binding; it reads GHVDHGKT. Thr26 contributes to the Mg(2+) binding site. Positions 60 to 64 are G2; the sequence is GITIS. The segment at 81 to 84 is G3; the sequence is DCPG. Residues 81-85 and 136-139 each bind GTP; these read DCPGH and NKCD. The segment at 136 to 139 is G4; the sequence is NKCD. Positions 174-176 are G5; the sequence is SAL.

The protein belongs to the TRAFAC class translation factor GTPase superfamily. Classic translation factor GTPase family. EF-Tu/EF-1A subfamily. In terms of assembly, monomer.

It is found in the cytoplasm. It catalyses the reaction GTP + H2O = GDP + phosphate + H(+). Functionally, GTP hydrolase that promotes the GTP-dependent binding of aminoacyl-tRNA to the A-site of ribosomes during protein biosynthesis. The sequence is that of Elongation factor Tu from Rhodopseudomonas palustris (strain HaA2).